Reading from the N-terminus, the 1213-residue chain is Formin (1213 aa).

5 disordered regions span residues 1–24, 66–111, 144–169, 183–216, and 357–489; these read MEGG…SEPD, QANN…EPEP, VHTT…TSKC, GNNQ…PISQ, and DVSK…PKAN. Composition is skewed to basic and acidic residues over residues 187–210 and 431–464; these read SKEE…DTEL and EAIK…DKSP. Coiled coils occupy residues 428–450 and 503–572; these read SELE…VFER and EYQA…IGVS. Residues 624–774 are disordered; the sequence is ISTQGENKDS…PRKPAIEPSR (151 aa). Residues 636–647 show a composition bias toward polar residues; sequence VPSSESVLSCQP. Composition is skewed to pro residues over residues 650–672, 680–689, and 718–751; these read MLPP…PPPF, LVPPPPPLPT, and PAPP…PPGP. In terms of domain architecture, FH1 spans 652–751; the sequence is PPSPPPPPPP…LPPPPPPPGP (100 aa). The span at 755–764 shows a compositional bias: polar residues; sequence FNSTLSSSQG. One can recognise an FH2 domain in the interval 766–1182; it reads RKPAIEPSRP…KVAQQSVSKL (417 aa). Residues 1050–1125 adopt a coiled-coil conformation; the sequence is FQASQVKFED…ENAQKCFEET (76 aa). Residues 1193-1213 form a disordered region; it reads INPTASLKERLRQKEANVNAN.

This sequence belongs to the formin homology family. Cappuccino subfamily. As to expression, present in the adult brain, kidney, brain, heart and intestine and throughout the embryo.

Its subcellular location is the nucleus. In terms of biological role, is important for morphogenesis of limb and kidney and may be involved in determining dorsoventral neural tube polarity and motor neuron induction. It may also have a function in differentiated cells or be involved in maintaining specific differentiated states. This Gallus gallus (Chicken) protein is Formin (LD).